The primary structure comprises 325 residues: Hydroxylase/desaturase poxK (325 aa).

Residues 1–12 are compositionally biased toward low complexity; that stretch reads MTATATPVPTVA. Residues 1–25 form a disordered region; it reads MTATATPVPTVASHAQDITLPPPPK.

It belongs to the asaB hydroxylase/desaturase family.

It participates in secondary metabolite biosynthesis. Hydroxylase/desaturase; part of the gene cluster that mediates the biosynthesis of oxaleimides, cytotoxic compounds containing an unusual disubstituted succinimide moiety. The first step of the pathway is provided by the HR-PKS poxF that serves in a new mode of collaborative biosynthesis with the PKS-NRPS poxE, by providing the olefin containing amino acid substrate via the synthesis of an ACP-bound dec-4-enoate. The cytochrome P450 monooxygenase poxM-catalyzed oxidation at the alpha-position creates the enzyme-bound 2-hydroxydec-4-enoyl-ACP thioester, which may be prone to spontaneous hydrolysis to yield 2-hydroxydec-4-enoic acid due to increased electrophilicity of the carbonyl. 2-hydroxydec-4-enoic acid can then be further oxidized by poxM to yield the alpha-ketoacid 2-oxodec-4-enoicacid, which is reductively aminated by the aminotransferase poxL to yield (S,E)-2-aminodec-4-enoic acid. The Hybrid PKS-NRPS synthetase poxE then performs condensation between the octaketide product of its PKS modules and the amino group of (S,E)-2-aminodec-4-enoic acid which is activated and incorporated by the adenylation domain. The resulting aminoacyl product can be cyclized by the Diels-Alderase PoxQ and reductively released by the reductive (R) domain of poxE to yield an aldehyde intermediate. The released aldehyde is then substrate for a Knoevenagel condensation by the hydrolyase poxO followed by an oxidation at the 5-position of the pyrrolidone ring. The presence of the olefin from the amino acid building block allows for migration of the substituted allyl group to occur. This allylic transposition reaction takes place in a conjugate addition, semipinacol-like fashion to yield a succinimide intermediate. Iterative two-electron oxidations of the C7 methyl of the succinimide intermediate to the carboxylic acid can be catalyzed by one of two remaining cytochrome P450 monooxygenasess poxC or poxD to yield oxaleimide A. Subsequent oxidation yields the maleimide scaffold oxaleimide I. Both oxaleimide A and oxaleimide I can undergo oxidative modifications in the decalin ring to yield the series of products oxaleimides B to H. The chain is Hydroxylase/desaturase poxK from Penicillium oxalicum (strain 114-2 / CGMCC 5302) (Penicillium decumbens).